The chain runs to 87 residues: U24 protein (87 aa).

A Phosphothreonine modification is found at Thr-6. The PPXY motif signature appears at 8–11; the sequence is PPSY. The helical transmembrane segment at 59-79 threads the bilayer; it reads FLVLTGLAIAMILFIVFVLYV.

In terms of assembly, interacts with host ITCH; this interaction probably mediates ITCH degradation. Interacts probably with NEDD4.

Its subcellular location is the membrane. Down-regulates the TCR/CD3E complex and the transferrin receptor TFRC in host T-cells by blocking them from recycling back to the cell surface. This is U24 protein (U24) from Homo sapiens (Human).